A 455-amino-acid polypeptide reads, in one-letter code: uncharacterized protein (455 aa).

Residues 1–27 (MSQRQQFQFLLSFLILIFLKFIIQIRC) form the signal peptide. The Extracellular portion of the chain corresponds to 29-434 (ESNGVIIIKN…GDDENLINSS (406 aa)). Residues Asn136, Asn148, Asn210, and Asn298 are each glycosylated (N-linked (GlcNAc...) asparagine). Residues 383 to 402 (SSSTTSTTSSSSSSSSSTTT) form a disordered region. Residues Asn421 and Asn432 are each glycosylated (N-linked (GlcNAc...) asparagine). A helical membrane pass occupies residues 435–455 (SVIKFSTPIIMIIIILINIKF).

Its subcellular location is the membrane. This is an uncharacterized protein from Dictyostelium discoideum (Social amoeba).